The sequence spans 148 residues: Cell division protein SepF (148 aa).

The protein belongs to the SepF family. In terms of assembly, homodimer. Interacts with FtsZ.

It is found in the cytoplasm. Its function is as follows. Cell division protein that is part of the divisome complex and is recruited early to the Z-ring. Probably stimulates Z-ring formation, perhaps through the cross-linking of FtsZ protofilaments. Its function overlaps with FtsA. This chain is Cell division protein SepF, found in Alkaliphilus metalliredigens (strain QYMF).